Reading from the N-terminus, the 196-residue chain is GTP cyclohydrolase 1 (196 aa).

Positions 86, 89, and 158 each coordinate Zn(2+).

It belongs to the GTP cyclohydrolase I family. As to quaternary structure, homomer.

The enzyme catalyses GTP + H2O = 7,8-dihydroneopterin 3'-triphosphate + formate + H(+). Its pathway is cofactor biosynthesis; 7,8-dihydroneopterin triphosphate biosynthesis; 7,8-dihydroneopterin triphosphate from GTP: step 1/1. This is GTP cyclohydrolase 1 from Clostridium botulinum (strain Kyoto / Type A2).